The primary structure comprises 331 residues: MRRGLLLLNLGTPDNADIRAVKLYLREFLTDKRVIDLPTIPRYILVYCLILPFRSPKSAQAYQSIWTEKGSPLLYHSQNLVTKLQSSLKDEYKIALGMRYGTPSITTALAELKDCHSLTILPLFPQYSSAATGSAIEKTLSYLANQEIIPSIKIIRDFYQRPEYIQAQAKIMKPYIKDNFHVLFSYHGIPERHIHKSGCDTLCPQTCTPIYDKNQACYRAQCYQTSLLLAKELQLGTHQYTTAFQSRLGKTPWIKPYTDEIFAELISKGIKNIVVSCPSFVADCLETLEEIGIRAKEQWEKLGGEQFILTPCMNDHPEWIKAIHSIVNEQI.

Residues His187 and Glu286 each contribute to the Fe cation site.

Belongs to the ferrochelatase family.

It localises to the cytoplasm. It carries out the reaction heme b + 2 H(+) = protoporphyrin IX + Fe(2+). It participates in porphyrin-containing compound metabolism; protoheme biosynthesis; protoheme from protoporphyrin-IX: step 1/1. Its function is as follows. Catalyzes the ferrous insertion into protoporphyrin IX. The sequence is that of Ferrochelatase from Legionella pneumophila (strain Paris).